A 665-amino-acid polypeptide reads, in one-letter code: Chaperone protein dnaK1 (665 aa).

Position 198 is a phosphothreonine; by autocatalysis (Thr198). The segment at 634–665 is disordered; it reads DDPWDNQMNSNSRNSRYGNSRDDDPWDNDYFL. Positions 642-651 are enriched in low complexity; it reads NSNSRNSRYG.

Belongs to the heat shock protein 70 family.

In terms of biological role, acts as a chaperone. The sequence is that of Chaperone protein dnaK1 (dnaK1) from Prochlorococcus marinus subsp. pastoris (strain CCMP1986 / NIES-2087 / MED4).